An 84-amino-acid chain; its full sequence is Toxin Tb1 (84 aa).

An N-terminal signal peptide occupies residues 1–20; it reads MKGMILFISCLLLIGIVVEC. One can recognise an LCN-type CS-alpha/beta domain in the interval 21 to 82; that stretch reads KEGYLMDHEG…VWDRATNKCG (62 aa). Intrachain disulfides connect cysteine 31–cysteine 81, cysteine 35–cysteine 57, cysteine 43–cysteine 62, and cysteine 47–cysteine 64. Position 81 is a cysteine amide (cysteine 81).

Belongs to the long (4 C-C) scorpion toxin superfamily. Sodium channel inhibitor family. Beta subfamily. As to expression, expressed by the venom gland.

Its subcellular location is the secreted. Its function is as follows. Beta toxins bind voltage-independently at site-4 of sodium channels (Nav) and shift the voltage of activation toward more negative potentials thereby affecting sodium channel activation and promoting spontaneous and repetitive firing. Is lethal to mice. The sequence is that of Toxin Tb1 from Tityus bahiensis (Brazilian scorpion).